The sequence spans 168 residues: Large ribosomal subunit protein bL17 (168 aa).

A disordered region spans residues 124–168 (QATGEAEAATKRAAKDAEGSAEVSEAKVDTTKADDEAAAEESKDA). The span at 131-168 (AATKRAAKDAEGSAEVSEAKVDTTKADDEAAAEESKDA) shows a compositional bias: basic and acidic residues.

This sequence belongs to the bacterial ribosomal protein bL17 family. As to quaternary structure, part of the 50S ribosomal subunit. Contacts protein L32.

This is Large ribosomal subunit protein bL17 from Streptomyces coelicolor (strain ATCC BAA-471 / A3(2) / M145).